The chain runs to 1109 residues: DNA-directed RNA polymerase subunit beta (1109 aa).

Belongs to the RNA polymerase beta chain family. As to quaternary structure, in plastids the minimal PEP RNA polymerase catalytic core is composed of four subunits: alpha, beta, beta', and beta''. When a (nuclear-encoded) sigma factor is associated with the core the holoenzyme is formed, which can initiate transcription.

Its subcellular location is the plastid. The protein localises to the chloroplast. It carries out the reaction RNA(n) + a ribonucleoside 5'-triphosphate = RNA(n+1) + diphosphate. DNA-dependent RNA polymerase catalyzes the transcription of DNA into RNA using the four ribonucleoside triphosphates as substrates. The chain is DNA-directed RNA polymerase subunit beta from Nephroselmis olivacea (Green alga).